Here is a 119-residue protein sequence, read N- to C-terminus: Protein MRP-126 (119 aa).

EF-hand domains are found at residues 23–58 and 59–94; these read DVFH…LKHV and KNQV…VTVA. The Ca(2+) site is built by threonine 37, glutamate 42, aspartate 72, asparagine 74, aspartate 76, glutamine 78, and glutamate 83.

It belongs to the S-100 family. In terms of tissue distribution, expressed in v-myb-transformed myelomonocytic cells.

The chain is Protein MRP-126 from Gallus gallus (Chicken).